Here is a 294-residue protein sequence, read N- to C-terminus: Cytidine deaminase (294 aa).

CMP/dCMP-type deaminase domains lie at 48–168 (DEDA…FGPK) and 186–294 (LTGD…VLLG). 89–91 (NME) provides a ligand contact to substrate. His102 is a binding site for Zn(2+). Glu104 (proton donor) is an active-site residue. Cys129 and Cys132 together coordinate Zn(2+).

The protein belongs to the cytidine and deoxycytidylate deaminase family. Homodimer. Zn(2+) is required as a cofactor.

It catalyses the reaction cytidine + H2O + H(+) = uridine + NH4(+). It carries out the reaction 2'-deoxycytidine + H2O + H(+) = 2'-deoxyuridine + NH4(+). In terms of biological role, this enzyme scavenges exogenous and endogenous cytidine and 2'-deoxycytidine for UMP synthesis. The protein is Cytidine deaminase of Salmonella enteritidis PT4 (strain P125109).